Consider the following 467-residue polypeptide: MAKSPFLELSYDILLEISTYLDYKDIVHLSETCKSLSYVFDDKTIWHRFCARVQGLTNVVPVVDDNYKRPYAVWKDRGYAYSWGQQIRNYLGRVVNTNQYPRDRPGALTGKDVRSTIQVQVGGYGMYLLNENGNLYVTGVPNNVGPELMRDLEPIVKIHAGREFCLALGETGHLYQVSLKTRICLTDEQNMLSAYRGRIANFKSGWDSHSAYVPGIGFLVWHTGRESEAQLFQPEASMKEFVLNDYVHCAGFLVYTVASPQKKGAVFRLDLDQATQHTLGRELKRFASHDPHQGWHLAGSFETFTCLSDDGNTVYMGHANTKQVDDDPVIHDFLQNRGIKQLAHGDHHHLYLTSDHSIWSWGVELRYCGCLGLGSLHLQEQTSDPSIVSDPRTARNIVSIPHQIHFSGTCYSVAAGGWQSAALAISESVLPEVNVPPITTFSIIRPSRVPALRFLAAPATRTLERDG.

The F-box domain maps to 3-49 (KSPFLELSYDILLEISTYLDYKDIVHLSETCKSLSYVFDDKTIWHRF). RCC1 repeat units follow at residues 77 to 131 (RGYA…LLNE), 302 to 354 (ETFT…YLTS), and 355 to 417 (DHSI…AAGG).

In terms of assembly, interacts with skp1.

It is found in the cytoplasm. It localises to the nucleus. The sequence is that of F-box protein pof9 (pof9) from Schizosaccharomyces pombe (strain 972 / ATCC 24843) (Fission yeast).